The sequence spans 74 residues: ATP synthase subunit c (74 aa).

The next 2 helical transmembrane spans lie at 8-28 (FIGIGFMAIGMYGAALGVSNI) and 52-72 (IGAGLAEAMGLFAFVIAMLLI).

It belongs to the ATPase C chain family. In terms of assembly, F-type ATPases have 2 components, F(1) - the catalytic core - and F(0) - the membrane proton channel. F(1) has five subunits: alpha(3), beta(3), gamma(1), delta(1), epsilon(1). F(0) has three main subunits: a(1), b(2) and c(10-14). The alpha and beta chains form an alternating ring which encloses part of the gamma chain. F(1) is attached to F(0) by a central stalk formed by the gamma and epsilon chains, while a peripheral stalk is formed by the delta and b chains.

The protein resides in the cell inner membrane. In terms of biological role, f(1)F(0) ATP synthase produces ATP from ADP in the presence of a proton or sodium gradient. F-type ATPases consist of two structural domains, F(1) containing the extramembraneous catalytic core and F(0) containing the membrane proton channel, linked together by a central stalk and a peripheral stalk. During catalysis, ATP synthesis in the catalytic domain of F(1) is coupled via a rotary mechanism of the central stalk subunits to proton translocation. Its function is as follows. Key component of the F(0) channel; it plays a direct role in translocation across the membrane. A homomeric c-ring of between 10-14 subunits forms the central stalk rotor element with the F(1) delta and epsilon subunits. In Rickettsia typhi (strain ATCC VR-144 / Wilmington), this protein is ATP synthase subunit c.